Consider the following 317-residue polypeptide: Transaldolase (317 aa).

Lys126 functions as the Schiff-base intermediate with substrate in the catalytic mechanism.

It belongs to the transaldolase family. Type 1 subfamily. As to quaternary structure, homodimer.

Its subcellular location is the cytoplasm. The enzyme catalyses D-sedoheptulose 7-phosphate + D-glyceraldehyde 3-phosphate = D-erythrose 4-phosphate + beta-D-fructose 6-phosphate. It participates in carbohydrate degradation; pentose phosphate pathway; D-glyceraldehyde 3-phosphate and beta-D-fructose 6-phosphate from D-ribose 5-phosphate and D-xylulose 5-phosphate (non-oxidative stage): step 2/3. In terms of biological role, transaldolase is important for the balance of metabolites in the pentose-phosphate pathway. The sequence is that of Transaldolase from Burkholderia cenocepacia (strain ATCC BAA-245 / DSM 16553 / LMG 16656 / NCTC 13227 / J2315 / CF5610) (Burkholderia cepacia (strain J2315)).